A 252-amino-acid chain; its full sequence is Triosephosphate isomerase (252 aa).

9 to 11 (NWK) is a binding site for substrate. The active-site Electrophile is H100. Catalysis depends on E171, which acts as the Proton acceptor. Substrate contacts are provided by residues G177, S216, and 237-238 (GG).

This sequence belongs to the triosephosphate isomerase family. In terms of assembly, homodimer.

The protein resides in the cytoplasm. The enzyme catalyses D-glyceraldehyde 3-phosphate = dihydroxyacetone phosphate. It functions in the pathway carbohydrate biosynthesis; gluconeogenesis. It participates in carbohydrate degradation; glycolysis; D-glyceraldehyde 3-phosphate from glycerone phosphate: step 1/1. Involved in the gluconeogenesis. Catalyzes stereospecifically the conversion of dihydroxyacetone phosphate (DHAP) to D-glyceraldehyde-3-phosphate (G3P). In Polynucleobacter asymbioticus (strain DSM 18221 / CIP 109841 / QLW-P1DMWA-1) (Polynucleobacter necessarius subsp. asymbioticus), this protein is Triosephosphate isomerase.